The chain runs to 96 residues: MNIRPLHDRVIVKRLEVESKSAGGIVLTGSAAEKSTRGKILAVGNGRISENGTVTPLDVKVGDVVIFNEGYGVKKEKIDGEEVLILSEADLMAVVG.

It belongs to the GroES chaperonin family. Heptamer of 7 subunits arranged in a ring. Interacts with the chaperonin GroEL.

It is found in the cytoplasm. Its function is as follows. Together with the chaperonin GroEL, plays an essential role in assisting protein folding. The GroEL-GroES system forms a nano-cage that allows encapsulation of the non-native substrate proteins and provides a physical environment optimized to promote and accelerate protein folding. GroES binds to the apical surface of the GroEL ring, thereby capping the opening of the GroEL channel. In Shewanella frigidimarina (strain NCIMB 400), this protein is Co-chaperonin GroES.